The primary structure comprises 606 residues: Glutamine--fructose-6-phosphate aminotransferase [isomerizing] (606 aa).

Cysteine 2 functions as the Nucleophile; for GATase activity in the catalytic mechanism. One can recognise a Glutamine amidotransferase type-2 domain in the interval 2-217; sequence CGIIGIVGKE…EGDYVALDHD (216 aa). SIS domains lie at 280-421 and 454-596; these read VPGD…ARGT and IAAD…VDQP. The For Fru-6P isomerization activity role is filled by lysine 601.

In terms of assembly, homodimer.

Its subcellular location is the cytoplasm. The catalysed reaction is D-fructose 6-phosphate + L-glutamine = D-glucosamine 6-phosphate + L-glutamate. Its function is as follows. Catalyzes the first step in hexosamine metabolism, converting fructose-6P into glucosamine-6P using glutamine as a nitrogen source. The chain is Glutamine--fructose-6-phosphate aminotransferase [isomerizing] from Caulobacter vibrioides (strain ATCC 19089 / CIP 103742 / CB 15) (Caulobacter crescentus).